We begin with the raw amino-acid sequence, 165 residues long: Protein eva-1 homolog B (165 aa).

The helical transmembrane segment at G29 to I49 threads the bilayer. Disordered stretches follow at residues P57–N109 and L143–Y165. The segment covering E74 to D84 has biased composition (acidic residues). T85, T148, and T158 each carry phosphothreonine.

The protein belongs to the EVA1 family.

It is found in the membrane. This chain is Protein eva-1 homolog B (EVA1B), found in Homo sapiens (Human).